The sequence spans 392 residues: Glutamyl-tRNA(Gln) amidotransferase subunit D (392 aa).

The Asparaginase/glutaminase domain occupies 68-391; the sequence is GNLGFIYTGG…DGIKKEMKRL (324 aa). Residues threonine 78, threonine 152, aspartate 153, and lysine 229 contribute to the active site.

The protein belongs to the asparaginase 1 family. GatD subfamily. As to quaternary structure, heterodimer of GatD and GatE.

The enzyme catalyses L-glutamyl-tRNA(Gln) + L-glutamine + ATP + H2O = L-glutaminyl-tRNA(Gln) + L-glutamate + ADP + phosphate + H(+). In terms of biological role, allows the formation of correctly charged Gln-tRNA(Gln) through the transamidation of misacylated Glu-tRNA(Gln) in organisms which lack glutaminyl-tRNA synthetase. The reaction takes place in the presence of glutamine and ATP through an activated gamma-phospho-Glu-tRNA(Gln). The GatDE system is specific for glutamate and does not act on aspartate. This chain is Glutamyl-tRNA(Gln) amidotransferase subunit D (gatD), found in Nanoarchaeum equitans (strain Kin4-M).